The following is a 181-amino-acid chain: Secreted chorismate mutase (181 aa).

The N-terminal stretch at Met1–Ala20 is a signal peptide. The 80-residue stretch at Asp21–Phe100 folds into the Chorismate mutase domain. Substrate is bound by residues Arg36, Lys47, Asp56, Arg59–Val63, Thr92–Glu96, and Arg121. A disulfide bond links Cys147 and Cys180.

Homodimer.

Its subcellular location is the secreted. It catalyses the reaction chorismate = prephenate. It functions in the pathway metabolic intermediate biosynthesis; prephenate biosynthesis; prephenate from chorismate: step 1/1. In terms of biological role, catalyzes the Claisen rearrangement of chorismate to prephenate. May play some role in the pathogenicity. The polypeptide is Secreted chorismate mutase (Mycolicibacterium smegmatis (strain ATCC 700084 / mc(2)155) (Mycobacterium smegmatis)).